Consider the following 155-residue polypeptide: Ribosomal RNA large subunit methyltransferase H (155 aa).

Residues leucine 72, glycine 103, and 122–127 (LGRMVW) each bind S-adenosyl-L-methionine.

It belongs to the RNA methyltransferase RlmH family. As to quaternary structure, homodimer.

It localises to the cytoplasm. It catalyses the reaction pseudouridine(1915) in 23S rRNA + S-adenosyl-L-methionine = N(3)-methylpseudouridine(1915) in 23S rRNA + S-adenosyl-L-homocysteine + H(+). Functionally, specifically methylates the pseudouridine at position 1915 (m3Psi1915) in 23S rRNA. This is Ribosomal RNA large subunit methyltransferase H from Cereibacter sphaeroides (strain KD131 / KCTC 12085) (Rhodobacter sphaeroides).